The following is a 181-amino-acid chain: Oligoribonuclease (181 aa).

The region spanning 8–171 (LIWVDLEMTG…EDIKESIAEM (164 aa)) is the Exonuclease domain. Residue tyrosine 129 is part of the active site.

Belongs to the oligoribonuclease family.

It is found in the cytoplasm. 3'-to-5' exoribonuclease specific for small oligoribonucleotides. In Shewanella frigidimarina (strain NCIMB 400), this protein is Oligoribonuclease.